The sequence spans 435 residues: Rho GTPase-activating protein 4 (435 aa).

The interval 1 to 59 (MAKVLKSSQSCHFPSPSSSSSTSCGGGNDGSNRDPHSPFNISRREEEEEEEERSEKERE) is disordered. Low complexity predominate over residues 7–23 (SSQSCHFPSPSSSSSTS). The CRIB domain maps to 93 to 106 (IGVPTDVRHVAHVT). Residues 138 to 319 (VSTESMQLSY…LIVKTLKDRK (182 aa)) form the Rho-GAP domain. Residues 321-343 (SRDKLVPASNPSPRDHNGDQSSS) are disordered.

In terms of biological role, acts as a GTPase activator for the Rac-type GTPase by converting it to an inactive GDP-bound state. Acts as a negative feedback regulator in tolerance to oxygen deprivation which requires ARAC4/ROP2. The protein is Rho GTPase-activating protein 4 (ROPGAP4) of Arabidopsis thaliana (Mouse-ear cress).